The primary structure comprises 371 residues: Peptidyl-prolyl cis-trans isomerase D (371 aa).

Positions 8 to 172 (FFDIAIGGQL…EPVVIADCGQ (165 aa)) constitute a PPIase cyclophilin-type domain. Residues 175 to 202 (SDDPFLAERTSTDGDPYEDYPDDEDQEL) form a disordered region. The span at 189 to 201 (DPYEDYPDDEDQE) shows a compositional bias: acidic residues. TPR repeat units lie at residues 212–245 (AKTIREVANRLYKQGDISGALQKYSKSIRYLDVH), 265–303 (APLLLNSALAAIRIEPHSAANAMNAVANTSRALNRLELS), and 308–341 (AKAYYRRGLAKTIMRDEVGAEQDLKTANELLPED).

This sequence belongs to the cyclophilin-type PPIase family. PPIase D subfamily.

It localises to the cytoplasm. It carries out the reaction [protein]-peptidylproline (omega=180) = [protein]-peptidylproline (omega=0). In terms of biological role, PPIases accelerate the folding of proteins. It catalyzes the cis-trans isomerization of proline imidic peptide bonds in oligopeptides. This is Peptidyl-prolyl cis-trans isomerase D (Cyp40) from Amanita muscaria (Fly agaric).